The primary structure comprises 388 residues: Succinate--CoA ligase [ADP-forming] subunit beta (388 aa).

An ATP-grasp domain is found at 9 to 244 (KEILRKFGVA…LDEEDPAEIE (236 aa)). Residues Lys46, 53 to 55 (GRG), Glu99, Ala102, and Glu107 each bind ATP. Residues Asn199 and Asp213 each coordinate Mg(2+). Residues Asn264 and 321–323 (GIM) contribute to the substrate site.

It belongs to the succinate/malate CoA ligase beta subunit family. As to quaternary structure, heterotetramer of two alpha and two beta subunits. The cofactor is Mg(2+).

The enzyme catalyses succinate + ATP + CoA = succinyl-CoA + ADP + phosphate. The catalysed reaction is GTP + succinate + CoA = succinyl-CoA + GDP + phosphate. Its pathway is carbohydrate metabolism; tricarboxylic acid cycle; succinate from succinyl-CoA (ligase route): step 1/1. Its function is as follows. Succinyl-CoA synthetase functions in the citric acid cycle (TCA), coupling the hydrolysis of succinyl-CoA to the synthesis of either ATP or GTP and thus represents the only step of substrate-level phosphorylation in the TCA. The beta subunit provides nucleotide specificity of the enzyme and binds the substrate succinate, while the binding sites for coenzyme A and phosphate are found in the alpha subunit. The protein is Succinate--CoA ligase [ADP-forming] subunit beta of Burkholderia cenocepacia (strain HI2424).